The following is an 828-amino-acid chain: Glycerol-3-phosphate acyltransferase (828 aa).

The HXXXXD motif motif lies at 310-315 (HRSHID).

It belongs to the GPAT/DAPAT family.

It localises to the cell inner membrane. The catalysed reaction is sn-glycerol 3-phosphate + an acyl-CoA = a 1-acyl-sn-glycero-3-phosphate + CoA. Its pathway is phospholipid metabolism; CDP-diacylglycerol biosynthesis; CDP-diacylglycerol from sn-glycerol 3-phosphate: step 1/3. The chain is Glycerol-3-phosphate acyltransferase from Pseudomonas putida (strain ATCC 47054 / DSM 6125 / CFBP 8728 / NCIMB 11950 / KT2440).